The sequence spans 293 residues: ATP synthase gamma chain (293 aa).

Belongs to the ATPase gamma chain family. In terms of assembly, F-type ATPases have 2 components, CF(1) - the catalytic core - and CF(0) - the membrane proton channel. CF(1) has five subunits: alpha(3), beta(3), gamma(1), delta(1), epsilon(1). CF(0) has three main subunits: a, b and c.

The protein resides in the cell inner membrane. In terms of biological role, produces ATP from ADP in the presence of a proton gradient across the membrane. The gamma chain is believed to be important in regulating ATPase activity and the flow of protons through the CF(0) complex. The polypeptide is ATP synthase gamma chain (Chlorobium chlorochromatii (strain CaD3)).